Consider the following 2329-residue polypeptide: Genome polyprotein (2329 aa).

A Peptidase C28 domain is found at 29-182; sequence MEFTLHNGEK…DPSDVLVFVP (154 aa). Catalysis depends on for leader protease activity residues cysteine 51, histidine 148, and aspartate 163. Disordered regions lie at residues 197–218 and 238–264; these read QKRL…QSGN and QLGD…NNTQ. A lipid anchor (N-myristoyl glycine; by host) is attached at glycine 202. Composition is skewed to polar residues over residues 204-218 and 238-251; these read GQSS…QSGN and QLGD…SNEG. A compositionally biased stretch (low complexity) spans 252–264; that stretch reads STDTTSTHTNNTQ. The antigenic epitope stretch occupies residues 787 to 795; it reads ALLRSATYY. The short motif at 866-868 is the Cell attachment site element; the sequence is RGD. Residues 1186–1350 form the SF3 helicase domain; sequence NVHIANLCKV…DGYKINNKLD (165 aa). An ATP-binding site is contributed by 1214-1221; sequence GKSGQGKS. Residues 1478–1498 lie within the membrane without spanning it; sequence KENFEIVALCLTLLANIVIMI. Composition is skewed to basic and acidic residues over residues 1526–1535 and 1546–1558; these read KTLDEAEKNP and FRER…KTSD. Positions 1526-1577 are disordered; sequence KTLDEAEKNPLETSGASTVGFRERTLPGRKTSDDVNSEPVKSVEEQPQAEGP. An O-(5'-phospho-RNA)-tyrosine mark is found at tyrosine 1578, tyrosine 1601, and tyrosine 1625. Residues 1649–1845 enclose the Peptidase C3 domain; it reads APPTDLQKMV…YCSCVSRSML (197 aa). Histidine 1692 functions as the For protease 3C activity; Proton donor/acceptor in the catalytic mechanism. Residues aspartate 1730 and cysteine 1809 each act as for protease 3C activity in the active site. 2 short sequence motifs (nuclear localization signal) span residues 1875–1883 and 1876–1883; these read MRKTKLAPT and RKTKLAPT. The region spanning 2093–2211 is the RdRp catalytic domain; it reads RNVWDVDYSA…ASDYDLDFEA (119 aa). Aspartate 2197 acts as the For RdRp activity in catalysis.

This sequence belongs to the picornaviruses polyprotein family. Interacts with host ISG15. As to quaternary structure, interacts (via R-G-D motif) with host ITGAV/ITGB6. Interacts with host MAVS; this interaction inhibits binding of host TRAF3 to MAVS, thereby suppressing interferon-mediated responses. In terms of assembly, forms homooligomers. Homohexamer. Interacts with host VIM. Interacts with host BECN1. As to quaternary structure, interacts with host DCTN3. In terms of assembly, interacts with RNA-dependent RNA polymerase; this interaction allows 3B-1 to binds 2 polymerases and act as a primer. It also allows the recruitment of the RNA-dependent RNA polymerase to host membranes. Interacts with RNA-dependent RNA polymerase; this interaction allows 3B-2 to act as a primer. As to quaternary structure, interacts with RNA-dependent RNA polymerase; this interaction allows 3B-3 to act as a primer. In terms of assembly, interacts with 3B-1; this interaction allows 3B-1 to binds 2 polymerases and act as a primer. It also allows the recruitment of the RNA-dependent RNA polymerase to host membranes. Interacts with 3B-2; this interaction allows 3B-2 to act as a primer. Interacts with 3B-3; this interaction allows 3B-3 to act as a primer. Specific enzymatic cleavages in vivo by the viral proteases yield a variety of precursors and mature proteins. The polyprotein seems to be cotranslationally cleaved at the 2A/2B junction by a ribosomal skip from one codon to the next without formation of a peptide bond. This process would release the L-P1-2A peptide from the translational complex. Post-translationally, during virion maturation, immature virions are rendered infectious following cleavage of VP0 into VP4 and VP2. This maturation seems to be an autocatalytic event triggered by the presence of RNA in the capsid and is followed by a conformational change of the particle. In terms of processing, myristoylation is required during RNA encapsidation and formation of the mature virus particle. Uridylylated by the polymerase and covalently linked to the 5'-end of genomic RNA. These uridylylated forms act as a nucleotide-peptide primer for the polymerase.

Its subcellular location is the host nucleus. The protein resides in the host cytoplasm. It is found in the virion. The protein localises to the host endoplasmic reticulum membrane. It localises to the host cytoplasmic vesicle membrane. The catalysed reaction is Autocatalytically cleaves itself from the polyprotein of the foot-and-mouth disease virus by hydrolysis of a Lys-|-Gly bond, but then cleaves host cell initiation factor eIF-4G at bonds -Gly-|-Arg- and -Lys-|-Arg-.. The enzyme catalyses a ribonucleoside 5'-triphosphate + H2O = a ribonucleoside 5'-diphosphate + phosphate + H(+). It catalyses the reaction RNA(n) + a ribonucleoside 5'-triphosphate = RNA(n+1) + diphosphate. It carries out the reaction Selective cleavage of Gln-|-Gly bond in the poliovirus polyprotein. In other picornavirus reactions Glu may be substituted for Gln, and Ser or Thr for Gly.. Its function is as follows. Autocatalytically cleaves itself from the polyprotein at the L/VP0 junction. Also cleaves the host translation initiation factors EIF4G1 and EIF4G3, in order to shut off the capped cellular mRNA transcription. Plays a role in counteracting host innate antiviral response using diverse mechanisms. Possesses a deubiquitinase activity acting on both 'Lys-48' and 'Lys-63'-linked polyubiquitin chains. In turn, inhibits the ubiquitination and subsequent activation of key signaling molecules of type I IFN response such as host RIGI, TBK1, TRAF3 and TRAF6. Inhibits host NF-kappa-B activity by inducing a decrease in RELA mRNA levels. Cleaves a peptide bond in the C-terminus of host ISG15, resulting in the damaging of this modifier that can no longer be attached to target proteins. Also cleaves host G3BP1 and G3BP2 in order to inhibit cytoplasmic stress granules assembly. In terms of biological role, lies on the inner surface of the capsid shell. After binding to the host receptor, the capsid undergoes conformational changes. Capsid protein VP4 is released, capsid protein VP1 N-terminus is externalized, and together, they shape a pore in the host membrane through which the viral genome is translocated into the host cell cytoplasm. After genome has been released, the channel shrinks. Functionally, forms an icosahedral capsid of pseudo T=3 symmetry with capsid proteins VP1 and VP3. The capsid is composed of 60 copies of each capsid protein organized in the form of twelve pentamers and encloses the viral positive strand RNA genome. Upon acidifcation in the endosome, dissociates into pentamers. Forms an icosahedral capsid of pseudo T=3 symmetry with capsid proteins VP0 and VP3. The capsid is composed of 60 copies of each capsid protein organized in the form of twelve pentamers and encloses the viral positive strand RNA genome. Upon acidifcation in the endosome, dissociates into pentamers. Its function is as follows. Forms an icosahedral capsid of pseudo T=3 symmetry with capsid proteins VP2 and VP3. The capsid is composed of 60 copies of each capsid protein organized in the form of twelve pentamers and encloses the viral positive strand RNA genome. Mediates cell entry by attachment to an integrin receptor, usually host ITGAV/ITGB6. In addition, targets host MAVS to suppress type I IFN pathway. Upon acidifcation in the endosome, dissociates into pentamers. In terms of biological role, mediates self-processing of the polyprotein by a translational effect termed 'ribosome skipping'. Mechanistically, 2A-mediated cleavage occurs between the C-terminal glycine and the proline of the downstream protein 2B. In the case of foot-and-mouth disease virus, the 2A oligopeptide is post-translationally 'trimmed' from the C-terminus of the upstream protein 1D by 3C proteinase. Functionally, plays an essential role in the virus replication cycle by acting as a viroporin. Creates a pore in the host endoplasmic reticulum and as a consequence releases Ca2+ in the cytoplasm of infected cell. In turn, high levels of cytoplasmic calcium may trigger membrane trafficking and transport of viral ER-associated proteins to viroplasms, sites of viral genome replication. Associates with and induces structural rearrangements of intracellular membranes. Triggers host autophagy by interacting with host BECN1 and thereby promotes viral replication. Participates in viral replication and interacts with host DHX9. Displays RNA-binding, nucleotide binding and NTPase activities. May play a role in virion morphogenesis and viral RNA encapsidation by interacting with the capsid protein VP3. Its function is as follows. Plays important roles in virus replication, virulence and host range. Cooperates with host DDX56 to inhibit IRF3 nuclear translocation and subsequent type I interferon production. In terms of biological role, covalently linked to the 5'-end of both the positive-strand and negative-strand genomic RNAs. Acts as a genome-linked replication primer. Functionally, cysteine protease that generates mature viral proteins from the precursor polyprotein. In addition to its proteolytic activity, binds to viral RNA and thus influences viral genome replication. RNA and substrate bind cooperatively to the protease. RNA-directed RNA polymerase 3D-POL replicates genomic and antigenomic RNA by recognizing replications specific signals. Covalently attaches UMP to a tyrosine of VPg, which is used to prime RNA synthesis. The positive stranded RNA genome is first replicated at virus induced membranous vesicles, creating a dsRNA genomic replication form. This dsRNA is then used as template to synthesize positive stranded RNA genomes. ss(+)RNA genomes are either translated, replicated or encapsidated. This chain is Genome polyprotein, found in Foot-and-mouth disease virus serotype Asia-1 (FMDV).